A 259-amino-acid chain; its full sequence is MPEARDRIERQVDYPAAFLNRRSHGILLDEPATQHNLFGSPVQRVPSEATGGLGSIGQGSMTGRGGLVRGNFGIRRTGGGRRGQIQFRSPQGRENMSLGVTRRGRARASNSVLPSWYPRTPLRDISAVVRAIERRRARMGEGVGRDIETPTPQQLGVLDSLVPLSGAHLEHDYSMVTPGPSIGFKRPWPPSTAKVHQILLDITRENTGEEDALTPEKKLLNSIDKVEKVVMEEIQKMKSTPSAKRAEREKRVRTLMSMR.

The tract at residues 236–259 is disordered; sequence KMKSTPSAKRAEREKRVRTLMSMR.

As to quaternary structure, interacts with APC/C activators such as APC5, FZR2, FZR3, CDC20.1 and CDC20.5. Expressed mainly in actively dividing cells (e.g. central cylinder of the root tip, young leaves and vascular tissues).

It localises to the nucleus. Negative regulator of the anaphase-promoting complex/cyclosome (APC/C) ubiquitin ligase required for proper mitotic progression and cell fate determination; inhibits premature cell differentiation. Prevents DNA endoreplication by promoting the maintenance of the mitotic state by preferentially inhibiting APC/C(FZR) and triggering cyclins accumulation (e.g. CYCB1-1, CYCB1-2 and CYCA2-3) in a temporal manner. Required for megagametophyte and endosperm development. Counteracts the activity of CCS52A1 thus inhibiting the turnover of CYCA2-3. Confers immunity to bacterial pathogens (e.g. Pseudomonas syringae pv. tomato DC3000), which is associated with increased expression of disease resistance (R) genes. This Arabidopsis thaliana (Mouse-ear cress) protein is Protein POLYCHOME (PYM).